The primary structure comprises 178 residues: ATP synthase subunit delta (178 aa).

Belongs to the ATPase delta chain family. In terms of assembly, F-type ATPases have 2 components, F(1) - the catalytic core - and F(0) - the membrane proton channel. F(1) has five subunits: alpha(3), beta(3), gamma(1), delta(1), epsilon(1). F(0) has three main subunits: a(1), b(2) and c(10-14). The alpha and beta chains form an alternating ring which encloses part of the gamma chain. F(1) is attached to F(0) by a central stalk formed by the gamma and epsilon chains, while a peripheral stalk is formed by the delta and b chains.

It is found in the cell inner membrane. F(1)F(0) ATP synthase produces ATP from ADP in the presence of a proton or sodium gradient. F-type ATPases consist of two structural domains, F(1) containing the extramembraneous catalytic core and F(0) containing the membrane proton channel, linked together by a central stalk and a peripheral stalk. During catalysis, ATP synthesis in the catalytic domain of F(1) is coupled via a rotary mechanism of the central stalk subunits to proton translocation. Its function is as follows. This protein is part of the stalk that links CF(0) to CF(1). It either transmits conformational changes from CF(0) to CF(1) or is implicated in proton conduction. The chain is ATP synthase subunit delta from Azotobacter vinelandii (strain DJ / ATCC BAA-1303).